Reading from the N-terminus, the 432-residue chain is Histidine--tRNA ligase (432 aa).

Residues T412–A432 form a disordered region. Basic and acidic residues predominate over residues E422–A432.

It belongs to the class-II aminoacyl-tRNA synthetase family.

Its subcellular location is the cytoplasm. It carries out the reaction tRNA(His) + L-histidine + ATP = L-histidyl-tRNA(His) + AMP + diphosphate + H(+). The chain is Histidine--tRNA ligase from Natronomonas pharaonis (strain ATCC 35678 / DSM 2160 / CIP 103997 / JCM 8858 / NBRC 14720 / NCIMB 2260 / Gabara) (Halobacterium pharaonis).